Reading from the N-terminus, the 187-residue chain is MAQERREGGRGREREERDDGMVDKLVHINRVAKVVKGGRRFGFAALVVVGDQKGRVGFGHGKAREVPEAIRKATESAKRDMIFVPLRSGRTLHHDVEGRWGAGRVLLRAAKQGTGIIAGGPMRAVFETLGMHDVVAKSMGSSNPYNMVRATFDALKSQMHPKDVAAARGIKYSTLQARRGTAVAAEE.

An S5 DRBM domain is found at 21 to 84; it reads MVDKLVHINR…ESAKRDMIFV (64 aa).

Belongs to the universal ribosomal protein uS5 family. Part of the 30S ribosomal subunit. Contacts proteins S4 and S8.

Functionally, with S4 and S12 plays an important role in translational accuracy. In terms of biological role, located at the back of the 30S subunit body where it stabilizes the conformation of the head with respect to the body. The protein is Small ribosomal subunit protein uS5 of Mesorhizobium japonicum (strain LMG 29417 / CECT 9101 / MAFF 303099) (Mesorhizobium loti (strain MAFF 303099)).